Here is a 402-residue protein sequence, read N- to C-terminus: Endoglucanase 1 (402 aa).

Residue Q1 is modified to Pyrrolidone carboxylic acid. 3 disulfides stabilise this stretch: C18/C24, C51/C73, and C63/C69. An N-linked (GlcNAc...) asparagine glycan is attached at N89. Intrachain disulfides connect C140-C365, C172-C195, C176-C194, C215-C234, C223-C228, and C239-C315. E197 (nucleophile) is an active-site residue. E202 (proton donor) is an active-site residue. N-linked (GlcNAc...) asparagine glycosylation is present at N247.

This sequence belongs to the glycosyl hydrolase 7 (cellulase C) family. As to quaternary structure, monomer.

It is found in the secreted. The catalysed reaction is Endohydrolysis of (1-&gt;4)-beta-D-glucosidic linkages in cellulose, lichenin and cereal beta-D-glucans.. The biological conversion of cellulose to glucose generally requires three types of hydrolytic enzymes: (1) Endoglucanases which cut internal beta-1,4-glucosidic bonds; (2) Exocellobiohydrolases that cut the disaccharide cellobiose from the non-reducing end of the cellulose polymer chain; (3) Beta-1,4-glucosidases which hydrolyze the cellobiose and other short cello-oligosaccharides to glucose. The chain is Endoglucanase 1 (CEL7B) from Humicola insolens (Soft-rot fungus).